Consider the following 212-residue polypeptide: MASLFSGRILIRNNSDQDELDTEAEVSRRLENRLVLLFFGAGACPQCQAFVPILKDFFVRLTDEFYVLRAAQLALVYVSQDSTEEQQDLFLKDMPKKWLFLPFEDDLRRDLGRQFSVERLPAVVVLKPDGDVLTRDGADEIQRLGTACFANWQEAAEVLDRNFQLPEDLEDQEPRSLTECLRRHKYRVEKAARGGRDPGGGGGEEGGAGGLF.

The 164-residue stretch at Met1–Gln164 folds into the Thioredoxin domain. The segment at Ala191–Phe212 is disordered. Residues Asp197–Phe212 show a composition bias toward gly residues.

This sequence belongs to the nucleoredoxin family. As to quaternary structure, interacts with isoform 1 of BSG.

It is found in the cell projection. The protein localises to the cilium. It localises to the photoreceptor outer segment. Plays an important role in retinal cone photoreceptor survival. In association with glucose transporter SLC16A1/GLUT1 and BSG, promotes retinal cone survival by enhancing aerobic glycolysis and accelerating the entry of glucose into photoreceptors. May play a role in cone cell viability, slowing down cone degeneration, does not seem to play a role in degenerating rods. The polypeptide is Nucleoredoxin-like protein 1 (NXNL1) (Homo sapiens (Human)).